Consider the following 402-residue polypeptide: Propionate kinase (402 aa).

The ATP site is built by Asn-11 and Lys-18. Residue Asn-11 coordinates Mg(2+). Position 86 (Arg-86) interacts with substrate. The active-site Proton donor/acceptor is Asp-143. ATP-binding positions include His-175, His-203–Gly-207, Asp-278–Arg-280, and Gly-326–Asn-330.

It belongs to the acetokinase family. TdcD subfamily. Homodimer. Requires Mg(2+) as cofactor.

It catalyses the reaction propanoate + ATP = propanoyl phosphate + ADP. It participates in amino-acid degradation; L-threonine degradation via propanoate pathway; propanoate from L-threonine: step 4/4. Functionally, catalyzes the conversion of propionyl phosphate and ADP to propionate and ATP. The polypeptide is Propionate kinase (Salmonella typhimurium (strain D23580)).